The primary structure comprises 499 residues: Glycerol kinase (499 aa).

Thr-13 serves as a coordination point for ADP. Thr-13, Thr-14, and Ser-15 together coordinate ATP. Thr-13 is a sn-glycerol 3-phosphate binding site. Arg-17 lines the ADP pocket. The sn-glycerol 3-phosphate site is built by Arg-83, Glu-84, Tyr-135, and Asp-244. The glycerol site is built by Arg-83, Glu-84, Tyr-135, Asp-244, and Gln-245. ADP contacts are provided by Thr-266 and Gly-309. Positions 266, 309, 313, and 410 each coordinate ATP. Residues Gly-410 and Asn-414 each coordinate ADP.

It belongs to the FGGY kinase family.

It carries out the reaction glycerol + ATP = sn-glycerol 3-phosphate + ADP + H(+). The protein operates within polyol metabolism; glycerol degradation via glycerol kinase pathway; sn-glycerol 3-phosphate from glycerol: step 1/1. With respect to regulation, inhibited by fructose 1,6-bisphosphate (FBP). Its function is as follows. Key enzyme in the regulation of glycerol uptake and metabolism. Catalyzes the phosphorylation of glycerol to yield sn-glycerol 3-phosphate. This chain is Glycerol kinase, found in Paraburkholderia phytofirmans (strain DSM 17436 / LMG 22146 / PsJN) (Burkholderia phytofirmans).